The sequence spans 187 residues: MRMNHMEMHHMGMNHTDDNITMPPHQHPTTSASHSHEMMMPMTFYFGFKNVDLLFSSLVINTPGEMAGAFVAVFLLAMFYEGLKIAREGLLRKSQVSIRYNSMPVPGPNGTILMETHKTVGQQMLSFPHLLQTVLHIIQVVISYFLMLIFMTYNGYLCIAVAAGAGTGYFLFSWKKAVVVDITEHCH.

Topologically, residues 1–65 (MRMNHMEMHH…SSLVINTPGE (65 aa)) are extracellular. The Bis-His motif signature appears at 9–10 (HH). Asparagine 19 carries N-linked (GlcNAc...) asparagine glycosylation. A glycan (O-linked (GalNAc...) threonine) is linked at threonine 30. Residues 66 to 86 (MAGAFVAVFLLAMFYEGLKIA) traverse the membrane as a helical segment. Over 87-129 (REGLLRKSQVSIRYNSMPVPGPNGTILMETHKTVGQQMLSFPH) the chain is Cytoplasmic. A Phosphothreonine modification is found at threonine 111. The helical transmembrane segment at 130–150 (LLQTVLHIIQVVISYFLMLIF) threads the bilayer. The Extracellular segment spans residues 151–153 (MTY). A helical membrane pass occupies residues 154–174 (NGYLCIAVAAGAGTGYFLFSW). Residues 175-187 (KKAVVVDITEHCH) are Cytoplasmic-facing. Cysteine 186 bears the Cysteine sulfenic acid (-SOH) mark.

The protein belongs to the copper transporter (Ctr) (TC 1.A.56) family. SLC31A subfamily. As to quaternary structure, homotrimer; is stabilized by cisplatin via interactions between cisplatin and the methionine-rich clusters, and could be crucial for the copper(2+) reduction process and copper(1+) stabilization. Heterotrimer between SLC31A1, CCS and SOD1; this heterotrimer is copper(1+)-mediated and its maintenance is regulated through SOD1 activation. Interacts with KDR; this interaction is induced upon VEGFA stimulation leading to SLC31A1 and KDR subsequent co-internalization to early endosomes, thereby activating KDR downstream signaling in endothelial cells. Interacts (via C-terminal domain) with ATOX1 (via dimer form); this interaction improves ATOX1 stability and controls intracellular copper(1+) levels. Interacts with SLC31A2; this interaction stabilizes SLC31A2 and protects its from ubiquitination and degradation. Interacts (via C-terminal domain) with CCS; this interaction is copper(1+)-mediated. Post-translationally, O-Glycosylation at Thr-30 protects from proteolytic cleavage in the N-terminal extracellular domain. In terms of processing, proteolytic cleavage, leading to a truncated form, is facilitated by SLC31A2 and initiated preferentially by CTSL and to a minor extend by CTSB in endolysosomal compartments. A post-CTSL/cathepsin L processing occurs to yield to the fully truncated form. Sulfenylated at Cys-186 after stimulation with VEGFA, which induces SLC31A1-KDR disulfide bond formation and their co-internalization to early endosomes, driving to a sustained VEGFR2 signaling.

The protein localises to the cell membrane. It localises to the early endosome membrane. It is found in the recycling endosome membrane. The protein resides in the apical cell membrane. Its subcellular location is the late endosome membrane. The protein localises to the basolateral cell membrane. The enzyme catalyses Cu(+)(out) = Cu(+)(in). The catalysed reaction is Ag(+)(out) = Ag(+)(in). With respect to regulation, copper uptake is inhibited by cold temperature, silver and zinc ions. Platinum-containing chemotherapeutic agents uptake is inhibited by cold temperature and copper. Uniporter that mediates the transport of copper(1+) from the extracellular space to the cytoplasm, across the plasma membrane. Then, delivers directly copper(1+) to specific chaperone such as ATOX1, via a copper(1+)- mediated transient interaction between the C-terminal domain and a copper(1+) chaperone, thus controlling intracellular copper(1+) levels. May function in copper(1+) import from the apical membrane thus may drive intestinal copper absorption. The copper(1+) transport mechanism is sodium-independent, saturable and of high-affinity. Also mediates the uptake of silver(1+). May function in the influx of the platinum-containing chemotherapeutic agents. The platinum-containing chemotherapeutic agents uptake is saturable. Also participates in the first step of copper(2+) acquisition by cells through a direct transfer of copper(2+) from copper(2+) carriers in blood, such as ALB to the N-terminal domain of SLC31A1, leading to copper(2+) reduction and probably followed by copper(1+) stabilization. In addition, functions as a redox sensor to promote angiogenesis in endothelial cells, in a copper(1+) transport independent manner, by transmitting the VEGF-induced ROS signal through a sulfenylation at Cys-189 leading to a subsequent disulfide bond formation between SLC31A1 and KDR. The SLC31A1-KDR complex is then co-internalized to early endosomes, driving a sustained VEGFR2 signaling. Its function is as follows. Mobilizes copper(1+) out of the endosomal compartment, making copper(1+) available for export out of the cells. This chain is High affinity copper uptake protein 1, found in Rattus norvegicus (Rat).